The primary structure comprises 171 residues: uncharacterized protein (171 aa).

A helical transmembrane segment spans residues 21-43 (GVAASLLILLAVYTIFQSTVVIA).

Its subcellular location is the membrane. This is an uncharacterized protein from Archaeoglobus fulgidus (strain ATCC 49558 / DSM 4304 / JCM 9628 / NBRC 100126 / VC-16).